Here is a 1349-residue protein sequence, read N- to C-terminus: Patatin-like phospholipase domain-containing protein 7 (1349 aa).

Over 1-36 (MQKEEDVCPEAGYCLGTALSSWGLHFMEEHSQSTML) the chain is Lumenal. A helical membrane pass occupies residues 37–57 (MGIGIGVLLTLAFVGLAAFFV). Residues 58–1349 (YRKVSRFRRA…DQGPRLYRPS (1292 aa)) are Cytoplasmic-facing. 170 to 297 (VLGHFEKPLF…VRVVQIIMVR (128 aa)) is a binding site for a nucleoside 3',5'-cyclic phosphate. The interval 340-361 (MSYGPEEQLERSPRLSEFNSSD) is disordered. 2 positions are modified to phosphoserine: serine 341 and serine 377. Residues 496–599 (FLHV…VVRR) and 610–715 (ALDW…LGEK) contribute to the a nucleoside 3',5'-cyclic phosphate site. The interval 678–964 (VHAVRDSELA…RGCAQVGILR (287 aa)) is involved in the binding to lipid droplets. A PNPLA domain is found at 947–1113 (LVLGGGGARG…INNLPADVAR (167 aa)). Positions 951–956 (GGGARG) match the GXGXXG motif. A GXSXG motif is present at residues 978–982 (GTSIG). Residue serine 980 is the Nucleophile of the active site. The Proton acceptor role is filled by aspartate 1100. A DGA/G motif is present at residues 1100 to 1102 (DGG). At serine 1277 the chain carries Phosphoserine. Threonine 1281 is modified (phosphothreonine). Residues 1297–1349 (DFQSTGIELDSDSECEPSMSQGPHSLTSPKQSQDSFPWLPNQDDQGPRLYRPS) are disordered. The segment covering 1314-1331 (SMSQGPHSLTSPKQSQDS) has biased composition (polar residues).

It belongs to the NTE family. Expressed in the brain, liver, kidney, lung and testis.

It is found in the endoplasmic reticulum membrane. The protein resides in the lipid droplet. It carries out the reaction a 1-acyl-sn-glycero-3-phosphocholine + H2O = sn-glycerol 3-phosphocholine + a fatty acid + H(+). The enzyme catalyses 1-(9Z-octadecenoyl)-sn-glycero-3-phosphocholine + H2O = sn-glycerol 3-phosphocholine + (9Z)-octadecenoate + H(+). The catalysed reaction is 1-(9Z-octadecenoyl)-sn-glycero-3-phosphoethanolamine + H2O = sn-glycero-3-phosphoethanolamine + (9Z)-octadecenoate + H(+). It catalyses the reaction 1-(9Z-octadecenoyl)-sn-glycero-3-phospho-L-serine + H2O = sn-glycero-3-phospho-L-serine + (9Z)-octadecenoate + H(+). It carries out the reaction 1-hexadecanoyl-sn-glycero-3-phosphocholine + H2O = sn-glycerol 3-phosphocholine + hexadecanoate + H(+). The enzyme catalyses 1-hexadecanoyl-sn-glycero-3-phosphate + H2O = sn-glycerol 3-phosphate + hexadecanoate + H(+). Its function is as follows. Lysophospholipase which preferentially deacylates unsaturated lysophosphatidylcholine (C18:1), generating glycerophosphocholine. Also can deacylate, to a lesser extent, lysophosphatidylethanolamine (C18:1), lysophosphatidyl-L-serine (C18:1) and lysophosphatidic acid (C16:0). This Rattus norvegicus (Rat) protein is Patatin-like phospholipase domain-containing protein 7 (Pnpla7).